A 322-amino-acid chain; its full sequence is Acetyl-coenzyme A carboxylase carboxyl transferase subunit alpha (322 aa).

The CoA carboxyltransferase C-terminal domain maps to 39-296; it reads DLTALKKQLI…HSKLVTELNY (258 aa).

Belongs to the AccA family. Acetyl-CoA carboxylase is a heterohexamer composed of biotin carboxyl carrier protein (accB), biotin carboxylase (accC) and two subunits each of ACCase subunit alpha (accA) and ACCase subunit beta (accD).

Its subcellular location is the plastid. It localises to the chloroplast. The enzyme catalyses N(6)-carboxybiotinyl-L-lysyl-[protein] + acetyl-CoA = N(6)-biotinyl-L-lysyl-[protein] + malonyl-CoA. Its pathway is lipid metabolism; malonyl-CoA biosynthesis; malonyl-CoA from acetyl-CoA: step 1/1. Functionally, component of the acetyl coenzyme A carboxylase (ACC) complex. First, biotin carboxylase catalyzes the carboxylation of biotin on its carrier protein (BCCP) and then the CO(2) group is transferred by the carboxyltransferase to acetyl-CoA to form malonyl-CoA. The sequence is that of Acetyl-coenzyme A carboxylase carboxyl transferase subunit alpha from Antithamnion sp. (Red alga).